The primary structure comprises 205 residues: Ras-like protein 3 (205 aa).

Gly-16–Ser-23 contacts GTP. The Effector region signature appears at Tyr-38 to Tyr-46. Residues Asp-63–Gln-67 and Asn-122–Asp-125 each bind GTP. Cys-202 is modified (cysteine methyl ester). Residue Cys-202 is the site of S-farnesyl cysteine attachment. The propeptide at Ile-203–Met-205 is removed in mature form.

This sequence belongs to the small GTPase superfamily. Ras family.

Its subcellular location is the cell membrane. It catalyses the reaction GTP + H2O = GDP + phosphate + H(+). With respect to regulation, alternates between an inactive form bound to GDP and an active form bound to GTP. Activated by a guanine nucleotide-exchange factor (GEF) and inactivated by a GTPase-activating protein (GAP). This Mucor circinelloides f. lusitanicus (Mucor racemosus var. lusitanicus) protein is Ras-like protein 3 (RAS3).